The sequence spans 169 residues: MKKWMLAICLMFINEICQATDCFDLAGRDYKIDPDLLRAISWKESRYRVNAIGINPVTGYGSGLMQVDSQHFNELARYGIKPEHLTTDPCMNIYTGAYYLAIAFKKWGVTWEAVGAYNAGFRKSERQNQRRLAYASEVYRIYTGIKSSKGIRLPATKKSLPEINSVQNN.

The protein belongs to the IagB/IpgF/P19 family.

The sequence is that of X polypeptide (X) from Escherichia coli.